A 350-amino-acid polypeptide reads, in one-letter code: Solute carrier family 35 member E4 (350 aa).

Positions 19–30 are enriched in low complexity; the sequence is GAAAGGAQAAGP. Positions 19–42 are disordered; that stretch reads GAAAGGAQAAGPPEWPPGSPQALR. The next 8 helical transmembrane spans lie at 51-71, 73-93, 110-132, 135-155, 218-238, 258-278, 279-299, and 312-332; these read MAAL…KWIF, VHGF…AALA, VLLL…RAVP, LAQL…ALLL, VTLL…AALV, ILLS…LLAL, TSAL…LILS, and YVGI…EFVA. In terms of domain architecture, EamA spans 125–179; that stretch reads NVGLRAVPLDLAQLVTTTTPLFTLALSALLLGRRHHPLQLAAMGPLCLGAACSLA.

The protein belongs to the TPT transporter family. SLC35E subfamily.

Its subcellular location is the membrane. Putative transporter. This chain is Solute carrier family 35 member E4 (SLC35E4), found in Homo sapiens (Human).